Consider the following 147-residue polypeptide: Ribosome maturation factor RimP (147 aa).

It belongs to the RimP family.

Its subcellular location is the cytoplasm. Functionally, required for maturation of 30S ribosomal subunits. The polypeptide is Ribosome maturation factor RimP (Legionella pneumophila (strain Paris)).